An 865-amino-acid chain; its full sequence is Protein translocase subunit SecA (865 aa).

Residues Gln93, Gly111–Thr115, and Asp501 contribute to the ATP site. Residues Cys841, Cys843, Cys852, and Cys853 each contribute to the Zn(2+) site.

Belongs to the SecA family. As to quaternary structure, monomer and homodimer. Part of the essential Sec protein translocation apparatus which comprises SecA, SecYEG and auxiliary proteins SecDF-YajC and YidC. Zn(2+) is required as a cofactor.

The protein resides in the cell inner membrane. It is found in the cytoplasm. The catalysed reaction is ATP + H2O + cellular proteinSide 1 = ADP + phosphate + cellular proteinSide 2.. Functionally, part of the Sec protein translocase complex. Interacts with the SecYEG preprotein conducting channel. Has a central role in coupling the hydrolysis of ATP to the transfer of proteins into and across the cell membrane, serving as an ATP-driven molecular motor driving the stepwise translocation of polypeptide chains across the membrane. The sequence is that of Protein translocase subunit SecA from Helicobacter pylori (strain Shi470).